Reading from the N-terminus, the 198-residue chain is MHYPEPISKLIDSFMKLPGIGPKTAVRLAFFVLDMKEDDVLGFAKALVNAKRDLAYCSVCGHITDRDPCYICNDSHRDQSVVCVVQEPKDVIAMEKMKEYQGVYHVLRGAISPMGGIGPEDINIPQLLKRLHDETVQEVILATNPNIEGEATAMYISRLLKPTGIKVTRIAHGLPVGGDLEYADEVTLSKALEGRREV.

Residues 57-72 form a C4-type zinc finger; sequence CSVCGHITDRDPCYIC. In terms of domain architecture, Toprim spans 80–175; that stretch reads SVVCVVQEPK…KVTRIAHGLP (96 aa).

Belongs to the RecR family.

May play a role in DNA repair. It seems to be involved in an RecBC-independent recombinational process of DNA repair. It may act with RecF and RecO. This chain is Recombination protein RecR, found in Bacillus anthracis (strain A0248).